A 503-amino-acid chain; its full sequence is Probable cytosol aminopeptidase (503 aa).

Mn(2+)-binding residues include K274 and D279. K286 is a catalytic residue. Mn(2+) is bound by residues D297, D356, and E358. Residue R360 is part of the active site.

The protein belongs to the peptidase M17 family. Requires Mn(2+) as cofactor.

It localises to the cytoplasm. The catalysed reaction is Release of an N-terminal amino acid, Xaa-|-Yaa-, in which Xaa is preferably Leu, but may be other amino acids including Pro although not Arg or Lys, and Yaa may be Pro. Amino acid amides and methyl esters are also readily hydrolyzed, but rates on arylamides are exceedingly low.. It carries out the reaction Release of an N-terminal amino acid, preferentially leucine, but not glutamic or aspartic acids.. Presumably involved in the processing and regular turnover of intracellular proteins. Catalyzes the removal of unsubstituted N-terminal amino acids from various peptides. In Burkholderia orbicola (strain MC0-3), this protein is Probable cytosol aminopeptidase.